Here is a 1026-residue protein sequence, read N- to C-terminus: UPF0182 protein FRAAL6027 (1026 aa).

Transmembrane regions (helical) follow at residues 13–33 (AKVIVPVLLAVALVIAFVAIF), 60–80 (ILLFLIFGAVMAVVIGTNIVL), 108–128 (YMKLVLVAVAAVFGLAAGLSA), 167–187 (FLLGFLLTAVLLSLLVTVLTH), 208–228 (AHISVLLGLLALLKAWAYYLD), 250–270 (AVLPAKLILLFISLACAVLFI), and 283–303 (LGAGILVLSSVVIGGIYPAFI). Low complexity predominate over residues 877–888 (AAAGAGTGATTT). 2 disordered regions span residues 877–916 (AAAGAGTGATTTTGGGGQATTQGGGTGAAPPGGTSGLQDA) and 958–1026 (LASP…PPPG). A compositionally biased stretch (gly residues) spans 889–903 (TGGGGQATTQGGGTG). Residues 970-1001 (PTPSRSAAPTTRGTAAGSAPPGTTPAVAAPAG) show a composition bias toward low complexity. The span at 1016–1026 (PQQPRAAPPPG) shows a compositional bias: pro residues.

Belongs to the UPF0182 family.

Its subcellular location is the cell membrane. The protein is UPF0182 protein FRAAL6027 of Frankia alni (strain DSM 45986 / CECT 9034 / ACN14a).